The primary structure comprises 147 residues: Hemoglobin subunit beta (147 aa).

Valine 2 carries the post-translational modification N-acetylvaline. Residues 3 to 147 enclose the Globin domain; the sequence is HLSGSEKTAV…VSHALAHKYH (145 aa). Threonine 13 is subject to Phosphothreonine. Phosphoserine is present on serine 45. Lysine 60 is modified (N6-acetyllysine). Histidine 64 is a heme b binding site. Residue lysine 83 is modified to N6-acetyllysine. Histidine 93 is a binding site for heme b. Cysteine 94 bears the S-nitrosocysteine mark. Lysine 145 bears the N6-acetyllysine mark.

Belongs to the globin family. Heterotetramer of two alpha chains and two beta chains. As to expression, red blood cells.

Involved in oxygen transport from the lung to the various peripheral tissues. This is Hemoglobin subunit beta (HBB) from Tachyglossus aculeatus aculeatus (Southeast Australian short-beaked echidna).